The sequence spans 424 residues: Gamma-glutamyl phosphate reductase (424 aa).

Belongs to the gamma-glutamyl phosphate reductase family.

It localises to the cytoplasm. It catalyses the reaction L-glutamate 5-semialdehyde + phosphate + NADP(+) = L-glutamyl 5-phosphate + NADPH + H(+). Its pathway is amino-acid biosynthesis; L-proline biosynthesis; L-glutamate 5-semialdehyde from L-glutamate: step 2/2. Functionally, catalyzes the NADPH-dependent reduction of L-glutamate 5-phosphate into L-glutamate 5-semialdehyde and phosphate. The product spontaneously undergoes cyclization to form 1-pyrroline-5-carboxylate. The sequence is that of Gamma-glutamyl phosphate reductase from Parvibaculum lavamentivorans (strain DS-1 / DSM 13023 / NCIMB 13966).